Here is a 1364-residue protein sequence, read N- to C-terminus: Trifunctional purine biosynthetic protein adenosine-3 (1364 aa).

One can recognise an ATP-grasp domain in the interval K114 to S321. I140 to S202 is an ATP binding site. Mn(2+)-binding residues include E291 and N293. The AIRS stretch occupies residues A435–P1154. Positions R1155–Q1364 are GART. G1166 to N1168 is a N(1)-(5-phospho-beta-D-ribosyl)glycinamide binding site. Residues R1221, M1246–L1249, and N1263 contribute to the (6R)-10-formyltetrahydrofolate site. Residue H1265 is the Proton donor of the active site. Residue D1297–D1301 coordinates (6R)-10-formyltetrahydrofolate. A N(1)-(5-phospho-beta-D-ribosyl)glycinamide-binding site is contributed by H1327 to E1330.

In the N-terminal section; belongs to the GARS family. It in the central section; belongs to the AIR synthase family. This sequence in the C-terminal section; belongs to the GART family.

It carries out the reaction 5-phospho-beta-D-ribosylamine + glycine + ATP = N(1)-(5-phospho-beta-D-ribosyl)glycinamide + ADP + phosphate + H(+). It catalyses the reaction 2-formamido-N(1)-(5-O-phospho-beta-D-ribosyl)acetamidine + ATP = 5-amino-1-(5-phospho-beta-D-ribosyl)imidazole + ADP + phosphate + H(+). The catalysed reaction is N(1)-(5-phospho-beta-D-ribosyl)glycinamide + (6R)-10-formyltetrahydrofolate = N(2)-formyl-N(1)-(5-phospho-beta-D-ribosyl)glycinamide + (6S)-5,6,7,8-tetrahydrofolate + H(+). It functions in the pathway purine metabolism; IMP biosynthesis via de novo pathway; 5-amino-1-(5-phospho-D-ribosyl)imidazole from N(2)-formyl-N(1)-(5-phospho-D-ribosyl)glycinamide: step 2/2. Its pathway is purine metabolism; IMP biosynthesis via de novo pathway; N(1)-(5-phospho-D-ribosyl)glycinamide from 5-phospho-alpha-D-ribose 1-diphosphate: step 2/2. The protein operates within purine metabolism; IMP biosynthesis via de novo pathway; N(2)-formyl-N(1)-(5-phospho-D-ribosyl)glycinamide from N(1)-(5-phospho-D-ribosyl)glycinamide (10-formyl THF route): step 1/1. Functionally, trifunctional enzyme required for de novo purine biosynthesis. The polypeptide is Trifunctional purine biosynthetic protein adenosine-3 (ade3) (Drosophila pseudoobscura pseudoobscura (Fruit fly)).